The chain runs to 548 residues: Membrane protein insertase YidC (548 aa).

The next 5 membrane-spanning stretches (helical) occupy residues 6-26 (NLIL…WESD), 349-369 (TVFQ…TLLV), 424-444 (LGGC…YWAL), 455-475 (FALW…PILM), and 503-523 (PIIF…YWLV).

The protein belongs to the OXA1/ALB3/YidC family. Type 1 subfamily. Interacts with the Sec translocase complex via SecD. Specifically interacts with transmembrane segments of nascent integral membrane proteins during membrane integration.

The protein localises to the cell inner membrane. Its function is as follows. Required for the insertion and/or proper folding and/or complex formation of integral membrane proteins into the membrane. Involved in integration of membrane proteins that insert both dependently and independently of the Sec translocase complex, as well as at least some lipoproteins. Aids folding of multispanning membrane proteins. This is Membrane protein insertase YidC from Aeromonas salmonicida (strain A449).